A 165-amino-acid chain; its full sequence is Pyruvoyl-dependent arginine decarboxylase 1 (165 aa).

Pyruvic acid (Ser) is present on serine 45.

It belongs to the PdaD family. It depends on pyruvate as a cofactor.

The catalysed reaction is L-arginine + H(+) = agmatine + CO2. The chain is Pyruvoyl-dependent arginine decarboxylase 1 (pdaD1) from Methanosarcina acetivorans (strain ATCC 35395 / DSM 2834 / JCM 12185 / C2A).